The primary structure comprises 529 residues: Peptide chain release factor 3 (529 aa).

One can recognise a tr-type G domain in the interval 11 to 280 (AKRRTFAIIS…GLVEWAPAPM (270 aa)). Residues 20-27 (SHPDAGKT), 88-92 (DTPGH), and 142-145 (NKLD) contribute to the GTP site.

Belongs to the TRAFAC class translation factor GTPase superfamily. Classic translation factor GTPase family. PrfC subfamily.

Its subcellular location is the cytoplasm. Increases the formation of ribosomal termination complexes and stimulates activities of RF-1 and RF-2. It binds guanine nucleotides and has strong preference for UGA stop codons. It may interact directly with the ribosome. The stimulation of RF-1 and RF-2 is significantly reduced by GTP and GDP, but not by GMP. This Escherichia coli O8 (strain IAI1) protein is Peptide chain release factor 3.